Here is a 20-residue protein sequence, read N- to C-terminus: Pregnancy-associated glycoprotein 75 (20 aa).

Belongs to the peptidase A1 family. N-glycosylated. In terms of tissue distribution, expressed in chorionic epithelium (trophectoderm).

Its subcellular location is the secreted. In Bubalus bubalis (Domestic water buffalo), this protein is Pregnancy-associated glycoprotein 75.